A 737-amino-acid chain; its full sequence is Propionyl-CoA carboxylase alpha chain, mitochondrial (737 aa).

Residues 1–61 (MAGLWVRTVA…QCLVVSRSLS (61 aa)) constitute a mitochondrion transit peptide. Residues 71–518 (TFDKILIANR…STKFLSDVYP (448 aa)) enclose the Biotin carboxylation domain. Lys-74 bears the N6-acetyllysine; alternate mark. Position 74 is an N6-succinyllysine; alternate (Lys-74). Lys-128 carries the N6-succinyllysine modification. An N6-acetyllysine; alternate modification is found at Lys-159. Lys-159 carries the N6-succinyllysine; alternate modification. Lys-163 carries the post-translational modification N6-acetyllysine. Lys-186 contributes to the ATP binding site. One can recognise an ATP-grasp domain in the interval 190–387 (KLLAKRAKVN…LVQEMILVAK (198 aa)). The residue at position 197 (Lys-197) is an N6-succinyllysine. The residue at position 209 (Lys-209) is an N6-acetyllysine; alternate. At Lys-209 the chain carries N6-succinyllysine; alternate. ATP is bound by residues 218–279 (AREI…PRHI), Glu-270, and Asn-305. A Phosphoserine modification is found at Ser-261. N6-succinyllysine is present on Lys-271. Lys-337 is modified (N6-acetyllysine; alternate). The residue at position 337 (Lys-337) is an N6-succinyllysine; alternate. 3 residues coordinate Mg(2+): Glu-345, Glu-358, and Asn-360. 3 residues coordinate Mn(2+): Glu-345, Glu-358, and Asn-360. Arg-362 is a catalytic residue. N6-succinyllysine is present on residues Lys-394 and Lys-416. Phe-418 lines the biotin pocket. Lys-505 is subject to N6-acetyllysine. 4 positions are modified to N6-succinyllysine: Lys-511, Lys-522, Lys-567, and Lys-657. The Biotinyl-binding domain maps to 658 to 737 (FMLEKVPKDT…GEGDLLVELE (80 aa)). Lys-703 is subject to N6-biotinyllysine; by HLCS.

The holoenzyme is a dodecamer composed of 6 PCCA/alpha subunits and 6 PCCB/beta subunits. Interacts (via the biotin carboxylation domain) with SIRT4. Interacts with SIRT3 and SIRT5. The cofactor is biotin. Mg(2+) serves as cofactor. Requires Mn(2+) as cofactor. In terms of processing, acetylated. The biotin cofactor is covalently attached to the C-terminal biotinyl-binding domain and is required for the catalytic activity. Biotinylation is catalyzed by HLCS.

It is found in the mitochondrion matrix. It catalyses the reaction propanoyl-CoA + hydrogencarbonate + ATP = (S)-methylmalonyl-CoA + ADP + phosphate + H(+). The enzyme catalyses butanoyl-CoA + hydrogencarbonate + ATP = (2S)-ethylmalonyl-CoA + ADP + phosphate + H(+). The protein operates within metabolic intermediate metabolism; propanoyl-CoA degradation; succinyl-CoA from propanoyl-CoA: step 1/3. In terms of biological role, this is one of the 2 subunits of the biotin-dependent propionyl-CoA carboxylase (PCC), a mitochondrial enzyme involved in the catabolism of odd chain fatty acids, branched-chain amino acids isoleucine, threonine, methionine, and valine and other metabolites. Propionyl-CoA carboxylase catalyzes the carboxylation of propionyl-CoA/propanoyl-CoA to D-methylmalonyl-CoA/(S)-methylmalonyl-CoA. Within the holoenzyme, the alpha subunit catalyzes the ATP-dependent carboxylation of the biotin carried by the biotin carboxyl carrier (BCC) domain, while the beta subunit then transfers the carboxyl group from carboxylated biotin to propionyl-CoA. Propionyl-CoA carboxylase also significantly acts on butyryl-CoA/butanoyl-CoA, which is converted to ethylmalonyl-CoA/(2S)-ethylmalonyl-CoA. Other alternative minor substrates include (2E)-butenoyl-CoA/crotonoyl-CoA. The protein is Propionyl-CoA carboxylase alpha chain, mitochondrial of Rattus norvegicus (Rat).